Consider the following 415-residue polypeptide: L-cysteine:1D-myo-inositol 2-amino-2-deoxy-alpha-D-glucopyranoside ligase (415 aa).

The tract at residues 1-20 (MQSWSETAVPSVPGQGPPLR) is disordered. Cys43 is a Zn(2+) binding site. L-cysteinyl-5'-AMP contacts are provided by residues 43–46 (CGIT), Thr58, and 81–83 (NVT). The 'HIGH' region motif lies at 45–55 (ITPYDATHLGH). The 'ERGGDP' region signature appears at 187–192 (ERGGDP). Trp227 lines the L-cysteinyl-5'-AMP pocket. A Zn(2+)-binding site is contributed by Cys231. 249-251 (GSD) serves as a coordination point for L-cysteinyl-5'-AMP. His256 is a Zn(2+) binding site. Ile283 serves as a coordination point for L-cysteinyl-5'-AMP. Residues 289–293 (KMSKS) carry the 'KMSKS' region motif.

It belongs to the class-I aminoacyl-tRNA synthetase family. MshC subfamily. Monomer. The cofactor is Zn(2+).

It carries out the reaction 1D-myo-inositol 2-amino-2-deoxy-alpha-D-glucopyranoside + L-cysteine + ATP = 1D-myo-inositol 2-(L-cysteinylamino)-2-deoxy-alpha-D-glucopyranoside + AMP + diphosphate + H(+). Catalyzes the ATP-dependent condensation of GlcN-Ins and L-cysteine to form L-Cys-GlcN-Ins. This is L-cysteine:1D-myo-inositol 2-amino-2-deoxy-alpha-D-glucopyranoside ligase from Rhodococcus jostii (strain RHA1).